A 299-amino-acid polypeptide reads, in one-letter code: Sodium/potassium-transporting ATPase subunit beta-2 (299 aa).

At 1–36 (MAALTQKKTCSQMMEEWKEFMWNPRTREFMGRTGSS) the chain is on the cytoplasmic side. The helical; Signal-anchor for type II membrane protein transmembrane segment at 37–57 (WALILLFYVVFYAFLTAVFSL) threads the bilayer. The Extracellular segment spans residues 58–299 (SLWVMLQTID…VIFTMKIDRL (242 aa)). N-linked (GlcNAc...) asparagine glycosylation is found at Asn101 and Asn119. Cystine bridges form between Cys130–Cys152 and Cys162–Cys178. N-linked (GlcNAc...) asparagine glycosylation is found at Asn199, Asn226, Asn247, and Asn259. Cys206 and Cys270 are joined by a disulfide.

Belongs to the X(+)/potassium ATPases subunit beta family. As to quaternary structure, the sodium/potassium-transporting ATPase is composed of a catalytic alpha subunit, an auxiliary non-catalytic beta subunit and an additional regulatory subunit. In terms of tissue distribution, expressed at a high level in bladder epithelial cells and eye and at a trace level in kidney; it is not detectable in significant amounts in the stomach, colon and small intestine.

Its subcellular location is the cell membrane. Functionally, this is the non-catalytic component of the active enzyme, which catalyzes the hydrolysis of ATP coupled with the exchange of Na(+) and K(+) ions across the plasma membrane. The exact function of this glycoprotein is not known. Some specific sequence of the beta subunit can modulate the activation of the Na,K-pump by extracellular potassium ions. The polypeptide is Sodium/potassium-transporting ATPase subunit beta-2 (Rhinella marina (Cane toad)).